Reading from the N-terminus, the 1054-residue chain is Acid trehalase (1054 aa).

A signal peptide spans 1 to 21 (MRFKSVFTLLPLLAQLPSGGA). N-linked (GlcNAc...) asparagine glycans are attached at residues N47, N135, N176, N283, and N307. A substrate-binding site is contributed by 448–449 (WD). 4 N-linked (GlcNAc...) asparagine glycosylation sites follow: N493, N513, N570, and N578. The active-site Proton donor is the E584. N-linked (GlcNAc...) asparagine glycans are attached at residues N618 and N644. 650–651 (KQ) contributes to the substrate binding site. 9 N-linked (GlcNAc...) asparagine glycosylation sites follow: N665, N734, N803, N826, N838, N903, N937, N966, and N992.

It belongs to the glycosyl hydrolase 65 family.

It carries out the reaction alpha,alpha-trehalose + H2O = alpha-D-glucose + beta-D-glucose. The protein is Acid trehalase (treA) of Emericella nidulans (strain FGSC A4 / ATCC 38163 / CBS 112.46 / NRRL 194 / M139) (Aspergillus nidulans).